A 227-amino-acid chain; its full sequence is ATP synthase subunit a (227 aa).

The next 6 membrane-spanning stretches (helical) occupy residues 14 to 34, 69 to 89, 98 to 118, 137 to 157, 169 to 189, and 205 to 223; these read LLNI…FVSF, WVVL…IGLF, QLSM…VYGF, LLVP…PLAL, HLLM…SVML, and IAVA…TLYL.

Belongs to the ATPase A chain family. In terms of assembly, F-type ATPases have 2 components, CF(1) - the catalytic core - and CF(0) - the membrane proton channel. CF(1) has five subunits: alpha(3), beta(3), gamma(1), delta(1), epsilon(1). CF(0) has three main subunits: a, b and c.

The protein resides in the mitochondrion inner membrane. Its function is as follows. Mitochondrial membrane ATP synthase (F(1)F(0) ATP synthase or Complex V) produces ATP from ADP in the presence of a proton gradient across the membrane which is generated by electron transport complexes of the respiratory chain. F-type ATPases consist of two structural domains, F(1) - containing the extramembraneous catalytic core and F(0) - containing the membrane proton channel, linked together by a central stalk and a peripheral stalk. During catalysis, ATP synthesis in the catalytic domain of F(1) is coupled via a rotary mechanism of the central stalk subunits to proton translocation. Key component of the proton channel; it may play a direct role in the translocation of protons across the membrane. In Branchiostoma floridae (Florida lancelet), this protein is ATP synthase subunit a (ATP6).